The chain runs to 105 residues: 5,5'-dehydrodivanillate O-demethylase ferredoxin subunit (105 aa).

A 2Fe-2S ferredoxin-type domain is found at Ala2–Asp105. Residues Cys40, Cys46, Cys49, and Cys86 each contribute to the [2Fe-2S] cluster site.

Belongs to the adrenodoxin/putidaredoxin family. In terms of assembly, monomer. The three-component monooxygenase is composed of an oxygenase (LigXa), a ferredoxin (LigXc) and a ferredoxin reductase (LigXd). [2Fe-2S] cluster serves as cofactor.

The catalysed reaction is 5,5'-dehydrodivanillate + NADH + O2 + H(+) = 2,2',3-trihydroxy-3'-methoxy-5,5'-dicarboxybiphenyl + formaldehyde + NAD(+) + H2O. Functionally, involved in the catabolism of 5,5'-dehydrodivanillate (DDVA), an intermediate in the biodegradation of lignin. Part of a three-component monooxygenase that catalyzes the O-demethylation of DDVA, leading to the formation of 2,2',3-trihydroxy-3'-methoxy-5,5'-dicarboxybiphenyl (OH-DDVA). LigXc probably functions as an intermediate electron transfer protein between LigXd and LigXa. The polypeptide is 5,5'-dehydrodivanillate O-demethylase ferredoxin subunit (Sphingobium sp. (strain NBRC 103272 / SYK-6)).